The primary structure comprises 734 residues: Amino-acid acetyltransferase, mitochondrial (734 aa).

The segment at 384–433 (YSETSSRSTRAEADSNFNLRDDIPLSSFTEQKSGELEYSPRHQNDSPTQQ) is disordered. Basic and acidic residues-rich tracts occupy residues 392-406 (TRAEADSNFNLRDDI) and 415-427 (KSGELEYSPRHQN). An N-acetyltransferase domain is found at 555–724 (GVPQISLTDP…YEAVCKTIEP (170 aa)).

This sequence belongs to the acetyltransferase family.

Its subcellular location is the mitochondrion. It catalyses the reaction L-glutamate + acetyl-CoA = N-acetyl-L-glutamate + CoA + H(+). The protein operates within amino-acid biosynthesis; L-arginine biosynthesis; N(2)-acetyl-L-ornithine from L-glutamate: step 1/4. N-acetylglutamate synthase involved in arginine biosynthesis. This chain is Amino-acid acetyltransferase, mitochondrial (arg2), found in Botryotinia fuckeliana (strain B05.10) (Noble rot fungus).